Reading from the N-terminus, the 391-residue chain is Formate-dependent phosphoribosylglycinamide formyltransferase (391 aa).

Residues 20-21 and E80 contribute to the N(1)-(5-phospho-beta-D-ribosyl)glycinamide site; that span reads EL. Residues R112, K153, 158–163, 193–196, and E201 each bind ATP; these read SSGKGQ and EGFI. Positions 117 to 306 constitute an ATP-grasp domain; the sequence is RLAAETLGLP…EFALHVRAIL (190 aa). Mg(2+) contacts are provided by E265 and E277. Residues D284, K354, and 361–362 contribute to the N(1)-(5-phospho-beta-D-ribosyl)glycinamide site; that span reads RR.

This sequence belongs to the PurK/PurT family. In terms of assembly, homodimer.

It carries out the reaction N(1)-(5-phospho-beta-D-ribosyl)glycinamide + formate + ATP = N(2)-formyl-N(1)-(5-phospho-beta-D-ribosyl)glycinamide + ADP + phosphate + H(+). It functions in the pathway purine metabolism; IMP biosynthesis via de novo pathway; N(2)-formyl-N(1)-(5-phospho-D-ribosyl)glycinamide from N(1)-(5-phospho-D-ribosyl)glycinamide (formate route): step 1/1. In terms of biological role, involved in the de novo purine biosynthesis. Catalyzes the transfer of formate to 5-phospho-ribosyl-glycinamide (GAR), producing 5-phospho-ribosyl-N-formylglycinamide (FGAR). Formate is provided by PurU via hydrolysis of 10-formyl-tetrahydrofolate. This chain is Formate-dependent phosphoribosylglycinamide formyltransferase, found in Shewanella sp. (strain MR-7).